The following is a 285-amino-acid chain: Thrombin-like enzyme TLBm (285 aa).

The Peptidase S1 domain maps to 1–273 (VIGGDECNIN…HLDWSQSVIA (273 aa)). Cystine bridges form between C7–C181, C30–C46, C94–C284, C156–C234, C192–C209, and C224–C249. Residues H45 and D113 each act as charge relay system in the active site. Residue S228 is the Charge relay system of the active site.

This sequence belongs to the peptidase S1 family. Snake venom subfamily. As to quaternary structure, monomer. Post-translationally, homologous thrombin-like enzymes are N-glycosylated. This enzyme does not contain the consensus glycosylation sites, suggesting it is not glycosylated. In terms of tissue distribution, expressed by the venom gland.

The protein localises to the secreted. With respect to regulation, inhibited by PMSF, disodium-EDTA, S(Dm) and soybean trypsin inhibitor (SBTI). SBTI and S(Dm) (the anti-hemorrhagic protein) acts as a non-competitive inhibitors that decrease the enzymatic activity. Its function is as follows. Thrombin-like enzyme that induces the formation of fibrin clot. Cleaves the Aalpha-chain of fibrinogen (FGA) with higher activity than the Bbeta-chain (FGB). Induces platelet aggregation in both platelet-rich plasma and in washed platelet preparations. This aggregation is strongly inhibited by preincubation of the enzyme with PMSF. The sequence is that of Thrombin-like enzyme TLBm from Bothrops marajoensis (Marajo lancehead).